The primary structure comprises 365 residues: c-di-GMP synthase (365 aa).

It belongs to the CD-NTase family. E subfamily.

It catalyses the reaction 2 GTP = 3',3'-c-di-GMP + 2 diphosphate. In terms of biological role, cyclic nucleotide synthase (second messenger synthase) of a CBASS antivirus system. CBASS (cyclic oligonucleotide-based antiphage signaling system) provides immunity against bacteriophage. The CD-NTase protein synthesizes cyclic nucleotides in response to infection; these serve as specific second messenger signals. The signals activate a diverse range of effectors, leading to bacterial cell death and thus abortive phage infection. A type I-D(GG) CBASS system. Cyclic dinucleotide synthase that catalyzes the synthesis of c-di-GMP, has no activity with other NTP substrates. The sequence is that of c-di-GMP synthase from Flavobacteriaceae sp. genome_bin_11.